An 85-amino-acid polypeptide reads, in one-letter code: uncharacterized protein (85 aa).

Residues 44–85 (EAHPSEHNGTVPRSLSQEWAKILAEEAEENSEENNDESEEDN) are disordered. The span at 50-60 (HNGTVPRSLSQ) shows a compositional bias: polar residues. Residues 68 to 85 (EEAEENSEENNDESEEDN) show a composition bias toward acidic residues.

This is an uncharacterized protein from Haloarcula hispanica (His1V).